The chain runs to 428 residues: Adenylosuccinate synthetase (428 aa).

GTP is bound by residues 12 to 18 and 40 to 42; these read GDEGKGK and GHT. The Proton acceptor role is filled by Asp-13. Mg(2+) contacts are provided by Asp-13 and Gly-40. Residues 13–16, 38–41, Thr-130, Arg-144, Gln-225, Thr-240, and Arg-304 contribute to the IMP site; these read DEGK and NAGH. The active-site Proton donor is His-41. 300-306 is a substrate binding site; sequence TTTGRPR. GTP is bound by residues Arg-306, 332–334, and 414–416; these read KLD and SVG.

It belongs to the adenylosuccinate synthetase family. Homodimer. Mg(2+) serves as cofactor.

Its subcellular location is the cytoplasm. It carries out the reaction IMP + L-aspartate + GTP = N(6)-(1,2-dicarboxyethyl)-AMP + GDP + phosphate + 2 H(+). It functions in the pathway purine metabolism; AMP biosynthesis via de novo pathway; AMP from IMP: step 1/2. Plays an important role in the de novo pathway of purine nucleotide biosynthesis. Catalyzes the first committed step in the biosynthesis of AMP from IMP. The protein is Adenylosuccinate synthetase of Caldanaerobacter subterraneus subsp. tengcongensis (strain DSM 15242 / JCM 11007 / NBRC 100824 / MB4) (Thermoanaerobacter tengcongensis).